The chain runs to 74 residues: Cytochrome c oxidase subunit 3 (74 aa).

2 helical membrane-spanning segments follow: residues 15-37 (SPWP…KWFH) and 42-59 (SLFL…YQWW).

The protein belongs to the cytochrome c oxidase subunit 3 family. In terms of assembly, component of the cytochrome c oxidase (complex IV, CIV), a multisubunit enzyme composed of a catalytic core of 3 subunits and several supernumerary subunits. The complex exists as a monomer or a dimer and forms supercomplexes (SCs) in the inner mitochondrial membrane with ubiquinol-cytochrome c oxidoreductase (cytochrome b-c1 complex, complex III, CIII).

The protein localises to the mitochondrion inner membrane. The catalysed reaction is 4 Fe(II)-[cytochrome c] + O2 + 8 H(+)(in) = 4 Fe(III)-[cytochrome c] + 2 H2O + 4 H(+)(out). Functionally, component of the cytochrome c oxidase, the last enzyme in the mitochondrial electron transport chain which drives oxidative phosphorylation. The respiratory chain contains 3 multisubunit complexes succinate dehydrogenase (complex II, CII), ubiquinol-cytochrome c oxidoreductase (cytochrome b-c1 complex, complex III, CIII) and cytochrome c oxidase (complex IV, CIV), that cooperate to transfer electrons derived from NADH and succinate to molecular oxygen, creating an electrochemical gradient over the inner membrane that drives transmembrane transport and the ATP synthase. Cytochrome c oxidase is the component of the respiratory chain that catalyzes the reduction of oxygen to water. Electrons originating from reduced cytochrome c in the intermembrane space (IMS) are transferred via the dinuclear copper A center (CU(A)) of subunit 2 and heme A of subunit 1 to the active site in subunit 1, a binuclear center (BNC) formed by heme A3 and copper B (CU(B)). The BNC reduces molecular oxygen to 2 water molecules using 4 electrons from cytochrome c in the IMS and 4 protons from the mitochondrial matrix. The polypeptide is Cytochrome c oxidase subunit 3 (mt:CoIII) (Drosophila simulans (Fruit fly)).